We begin with the raw amino-acid sequence, 384 residues long: S-adenosylmethionine synthase (384 aa).

His-15 contacts ATP. Residue Asp-17 participates in Mg(2+) binding. Glu-43 provides a ligand contact to K(+). 2 residues coordinate L-methionine: Glu-56 and Gln-99. Residues 99 to 109 (QSPDINQGVDR) form a flexible loop region. Residues 164 to 166 (DAK), 230 to 231 (RF), Asp-239, 245 to 246 (RK), Ala-262, and Lys-266 each bind ATP. Asp-239 provides a ligand contact to L-methionine. An L-methionine-binding site is contributed by Lys-270.

It belongs to the AdoMet synthase family. Homotetramer; dimer of dimers. It depends on Mg(2+) as a cofactor. K(+) is required as a cofactor.

The protein localises to the cytoplasm. The catalysed reaction is L-methionine + ATP + H2O = S-adenosyl-L-methionine + phosphate + diphosphate. The protein operates within amino-acid biosynthesis; S-adenosyl-L-methionine biosynthesis; S-adenosyl-L-methionine from L-methionine: step 1/1. In terms of biological role, catalyzes the formation of S-adenosylmethionine (AdoMet) from methionine and ATP. The overall synthetic reaction is composed of two sequential steps, AdoMet formation and the subsequent tripolyphosphate hydrolysis which occurs prior to release of AdoMet from the enzyme. The sequence is that of S-adenosylmethionine synthase from Salmonella arizonae (strain ATCC BAA-731 / CDC346-86 / RSK2980).